A 207-amino-acid polypeptide reads, in one-letter code: Small ribosomal subunit protein uS10m (207 aa).

The transit peptide at 1–24 (MLSVFGLRTVARCNSTLASGGARA) directs the protein to the mitochondrion.

This sequence belongs to the universal ribosomal protein uS10 family. In terms of assembly, part of the mitochondrial small ribosomal subunit.

Its subcellular location is the mitochondrion. Involved in mitochondrial genome encoded proteins translation. Involved in the binding of tRNA to the ribosomes. This Eremothecium gossypii (strain ATCC 10895 / CBS 109.51 / FGSC 9923 / NRRL Y-1056) (Yeast) protein is Small ribosomal subunit protein uS10m (RSM10).